Consider the following 180-residue polypeptide: UPF0227 protein PC1_2487 (180 aa).

Belongs to the UPF0227 family.

The chain is UPF0227 protein PC1_2487 from Pectobacterium carotovorum subsp. carotovorum (strain PC1).